The chain runs to 492 residues: uncharacterized protein (492 aa).

Helical transmembrane passes span V67–L87, A88–G108, I110–V130, G157–G177, Y185–L205, I232–I252, F255–F275, L294–V314, W333–W353, F367–Q387, L392–L412, S434–F454, and G464–I484.

This sequence belongs to the major facilitator superfamily. Proton-dependent oligopeptide transporter (POT/PTR) (TC 2.A.17) family.

Its subcellular location is the cell membrane. This is an uncharacterized protein from Bacillus subtilis (strain 168).